A 331-amino-acid chain; its full sequence is MINSDAQSAQKQVEVEKPDEKYSAPRLLPPIPDSYQPAKAITKIPATSSLEDILAILERDGGVILTDFVSLQELDKIDEELEPYTKSSIADDDSYNNFIGKKTLVIPGLVGKSDTIANILDTNETIDKLLKVILEERYPAVFEQHTEELVVDPLLSICMGFHVGHGSPRQALHRDDMIFSSKHRPDMKINEVDGFSCFLAGTRITRENGGTMVILGSHKWEHDRRGRPDEVSFLEMERGSAFIFLSTLAHGAGYNTIPGEVRKITNLVFCRGTLRTEENQFLCVPRSKVLKMSPKMQTLLGFKKPAGSWLGMVENEDPAKDLEAIYEKMLK.

The segment covering methionine 1–lysine 11 has biased composition (polar residues). A disordered region spans residues methionine 1–isoleucine 31. Over residues valine 13–serine 23 the composition is skewed to basic and acidic residues. Positions 173, 175, and 250 each coordinate Fe cation.

Belongs to the PhyH family. In terms of assembly, homodimer. Fe cation is required as a cofactor.

Its pathway is mycotoxin biosynthesis. Dioxygenase; part of the gene cluster that mediates the biosynthesis of swainsonine (SW), a cytotoxic fungal alkaloid and a potential cancer therapy drug. Swainsonine production occurs via a multibranched pathway and is dispensable for fungal colonization of plants and infection of insect hosts. The first step of swainsonine biosynthesis is the production of the precursor pipecolic acid (PA) via conversion of L-lysine (Lys) to 1-piperideine-6-carboxylate (P6C) by the aminotransferase swnA, the latter being further reduced to PA by the reductase swnR. PA can be converted from lysine by both the SW biosynthetic cluster and the unclustered genes such as lysine cyclodeaminase. The PKS-NRPS hybrid synthetase swnK uptakes and condensates PA and malonyl-CoA with and without skipping of the ketoreductase (KR) domain in order to produce 3 intermediates, 1-oxoindolizidine, (1S)-1-hydroxyindolizin, and (1R)-1-hydroxyindolizine; with the transisomer (1S)-1-hydroxyindolizin being predominant. The terminal thioester reductase (TE) domain of swnK is involved in reduction of the thioester bond to release the intermediate aldehydes. The oxidoreductase swnN could contribute to the reduction of 1-oxoindolizidine to (1S)-1-hydroxyindolizin and (1R)-1-hydroxyindolizine, contributing to the major route of SW production. The dioxygenase swnH2 would be responsible for the oxidization of (1R)-1-hydroxyindolizine into (1R,2S)-1,2-dihydroxyindolizine and of (1S)-1-hydroxyindolizin to yield both (1R,2S)-1,2-dihydroxyindolizine and (1S,2S)-1,2-dihydroxyindolizine. The dioxygenase swnH1 then performs the conversion of the 1,2-dihydroxyindolizine epimers to SW. This Metarhizium robertsii (strain ARSEF 23 / ATCC MYA-3075) (Metarhizium anisopliae (strain ARSEF 23)) protein is Dioxygenase swnH2.